The primary structure comprises 466 residues: Cysteine--tRNA ligase (466 aa).

Residue C28 coordinates Zn(2+). The 'HIGH' region signature appears at P30–N40. 3 residues coordinate Zn(2+): C208, H233, and E237. Positions K265 to S269 match the 'KMSKS' region motif. Position 268 (K268) interacts with ATP. The residue at position 269 (S269) is a Phosphoserine.

It belongs to the class-I aminoacyl-tRNA synthetase family. As to quaternary structure, monomer. Zn(2+) serves as cofactor.

The protein localises to the cytoplasm. The catalysed reaction is tRNA(Cys) + L-cysteine + ATP = L-cysteinyl-tRNA(Cys) + AMP + diphosphate. This is Cysteine--tRNA ligase from Shouchella clausii (strain KSM-K16) (Alkalihalobacillus clausii).